Here is a 229-residue protein sequence, read N- to C-terminus: Non-structural protein P8 (229 aa).

2 helical membrane-spanning segments follow: residues 119–139 (IIHM…VCTL) and 162–182 (SLNP…MVCA).

This sequence belongs to the orbivirus NS3 family. As to quaternary structure, forms homooligomers via coiled-coil motif. Interacts with host OPTN; this interaction inhibits innate immune response.

It is found in the host cell membrane. The protein localises to the host Golgi apparatus. Its function is as follows. Plays a role in the inhibition of host innate immune response. Interacts with host OPTN and thus inhibits the recruitment of TBK1 to the host Golgi apparatus. In turn, downstream partner IRF3 cannot be activated and IFN-beta production is impaired. Facilitates viral particle release either by increasing plasma membrane permeability through a viroporin-like activity or by viral budding. This Bluetongue virus 1 (isolate Australia) (BTV 1) protein is Non-structural protein P8 (Segment-10).